Reading from the N-terminus, the 360-residue chain is Phospho-N-acetylmuramoyl-pentapeptide-transferase (360 aa).

The next 10 membrane-spanning stretches (helical) occupy residues 26-46 (AVLSLLTALLLSLWIGPKMIL), 73-93 (TMGGIMILATITASSLLWGDL), 94-114 (SNPYIWCSLFVLLGYGAIGFV), 132-152 (WKYFWLSVVAFIAVFTMYMIG), 168-188 (IMPQLGLFYIVLAYFVIVGTS), 199-219 (GLAIMPTVFVAGAFAIIAWAT), 239-259 (LVIFCTAIVGAGLGFLWFNTY), 263-283 (VFMGDVGSLALGGALGVIAVL), 288-308 (FLLVIMGGVFVMETVSVILQV), and 338-358 (VIIRFWIISLMLVLLGLVTLK).

It belongs to the glycosyltransferase 4 family. MraY subfamily. It depends on Mg(2+) as a cofactor.

The protein localises to the cell inner membrane. It carries out the reaction UDP-N-acetyl-alpha-D-muramoyl-L-alanyl-gamma-D-glutamyl-meso-2,6-diaminopimeloyl-D-alanyl-D-alanine + di-trans,octa-cis-undecaprenyl phosphate = di-trans,octa-cis-undecaprenyl diphospho-N-acetyl-alpha-D-muramoyl-L-alanyl-D-glutamyl-meso-2,6-diaminopimeloyl-D-alanyl-D-alanine + UMP. It participates in cell wall biogenesis; peptidoglycan biosynthesis. Functionally, catalyzes the initial step of the lipid cycle reactions in the biosynthesis of the cell wall peptidoglycan: transfers peptidoglycan precursor phospho-MurNAc-pentapeptide from UDP-MurNAc-pentapeptide onto the lipid carrier undecaprenyl phosphate, yielding undecaprenyl-pyrophosphoryl-MurNAc-pentapeptide, known as lipid I. In Actinobacillus succinogenes (strain ATCC 55618 / DSM 22257 / CCUG 43843 / 130Z), this protein is Phospho-N-acetylmuramoyl-pentapeptide-transferase.